We begin with the raw amino-acid sequence, 662 residues long: MGLYRIRVSTGASLYAGSNNQVQLWLVGQHGEAALGKRLWPARGKETELKVEVPEYLGPLLFVKLRKRHLLKDDAWFCNWISVQGPGAGDEVRFPCYRWVEGNGVLSLPEGTGRTVGEDPQGLFQKHREEELEERRKLYRWGNWKDGLILNMAGAKLYDLPVDERFLEDKRVDFEVSLAKGLADLAIKDSLNVLTCWKDLDDFNRIFWCGQSKLAERVRDSWKEDALFGYQFLNGANPVVLRRSAHLPARLVFPPGMEELQAQLEKELEGGTLFEADFSLLDGIKANVILCSQQHLAAPLVMLKLQPDGKLLPMVIQLQLPRTGSPPPPLFLPTDPPMAWLLAKCWVRSSDFQLHELQSHLLRGHLMAEVIVVATMRCLPSIHPIFKLIIPHLRYTLEINVRARTGLVSDMGIFDQIMSTGGGGHVQLLKQAGAFLTYSSFCPPDDLADRGLLGVKSSFYAQDALRLWEIIYRYVEGIVSLHYKTDVAVKDDPELQTWCREITEIGLQGAQDRGFPVSLQARDQVCHFVTMCIFTCTGQHASVHLGQLDWYSWVPNAPCTMRLPPPTTKDATLETVMATLPNFHQASLQMSITWQLGRRQPVMVAVGQHEEEYFSGPEPKAVLKKFREELAALDKEIEIRNAKLDMPYEYLRPSVVENSVAI.

Residues 2–114 (GLYRIRVSTG…VLSLPEGTGR (113 aa)) form the PLAT domain. In terms of domain architecture, Lipoxygenase spans 115–662 (TVGEDPQGLF…PSVVENSVAI (548 aa)). Residues His360, His365, His540, His544, and Ile662 each coordinate Fe cation.

Belongs to the lipoxygenase family. As to quaternary structure, interacts with PEBP1; in response to IL13/interleukin-13, prevents the interaction of PEBP1 with RAF1 to activate the ERK signaling cascade. It depends on Fe cation as a cofactor. In terms of tissue distribution, detected in monocytes and eosinophils (at protein level). Expressed in airway epithelial cells.

It localises to the cytoplasm. The protein resides in the cytosol. It is found in the cell membrane. Its subcellular location is the lipid droplet. The catalysed reaction is (5Z,8Z,11Z,14Z)-eicosatetraenoate + O2 = (12S)-hydroperoxy-(5Z,8Z,10E,14Z)-eicosatetraenoate. The enzyme catalyses (5Z,8Z,11Z,14Z)-eicosatetraenoate + O2 = (15S)-hydroperoxy-(5Z,8Z,11Z,13E)-eicosatetraenoate. It catalyses the reaction (9Z,12Z)-octadecadienoate + O2 = (13S)-hydroperoxy-(9Z,11E)-octadecadienoate. It carries out the reaction (5Z,8Z,11Z,14Z)-eicosatetraenoate + 2 O2 = (14R,15S)-dihydroperoxy-(5Z,8Z,10E,12E)-eicosatetraenoate. The catalysed reaction is (5Z,8Z,11Z,14Z)-eicosatetraenoate + 2 O2 = (8S,15S)-dihydroperoxy-(5Z,9E,11Z,13E)-eicosatetraenoate. The enzyme catalyses (14S,15R)-epoxy-(5Z,8Z,11Z)-eicosatrienoate + O2 = (8S)-hydroperoxy-(14S,15R)-epoxy-(5Z,9E,11Z)-eicosatrienoate. It catalyses the reaction (14S,15R)-epoxy-(5Z,8Z,11Z)-eicosatrienoate + O2 = (12S)-hydroperoxy-(14S,15R)-epoxy-(5Z,8Z,10E)-eicosatrienoate. It carries out the reaction (14R,15S)-epoxy-(5Z,8Z,11Z)-eicosatrienoate + O2 = (5S)-hydroperoxy-(14R,15S)-epoxy-(6E,8Z,11Z)-eicosatrienoate. The catalysed reaction is (14R,15S)-epoxy-(5Z,8Z,11Z)-eicosatrienoate + O2 = (12S)-hydroperoxy-(14R,15S)-epoxy-(5Z,8Z,10E)-eicosatrienoate. The enzyme catalyses (15R)-hydroperoxy-(5Z,8Z,11Z,13E)-eicosatetraenoate = 15-oxo-(5Z,8Z,11Z,13E)-eicosatetraenoate + H2O. It catalyses the reaction (15S)-hydroperoxy-(5Z,8Z,11Z,13E)-eicosatetraenoate = (14S,15S)-epoxy-(5Z,8Z,10E,12E)-eicosatetraenoate + H2O. It carries out the reaction (12S)-hydroperoxy-(5Z,8Z,10E,14Z)-eicosatetraenoate = (8S)-hydroxy-(11S,12S)-epoxy-(5Z,9E,14Z)-eicosatrienoate. The catalysed reaction is (4Z,7Z,10Z,13Z,16Z,19Z)-docosahexaenoate + O2 = (14S)-hydroperoxy-(4Z,7Z,10Z,12E,16Z,19Z)-docosahexaenoate. The enzyme catalyses (4Z,7Z,10Z,13Z,16Z,19Z)-docosahexaenoate + O2 = (17S)-hydroperoxy-(4Z,7Z,10Z,13Z,15E,19Z)-docosahexaenoate. It catalyses the reaction (7S)-hydroperoxy-(4Z,8E,10Z,13Z,16Z,19Z)-docosahexaenoate + O2 = (7S,14S)-dihydroperoxy-(4Z,8E,10Z,12E,16Z,19Z)-docosahexaenoate. It carries out the reaction (7S)-hydroperoxy-(4Z,8E,10Z,13Z,16Z,19Z)-docosahexaenoate + O2 = (7S,17S)-dihydroperoxy-(4Z,8E,10Z,13Z,15E,19Z)-docosahexaenoate. The catalysed reaction is (4Z,7Z,10Z,13Z,16Z,19Z)-docosahexaenoate + O2 = (11S)-hydroperoxy-(4Z,7Z,9E,13Z,16Z,19Z)-docosahexaenoate. The enzyme catalyses (7Z,10Z,13Z,16Z,19Z)-docosapentaenoate + O2 = 14-hydroperoxy-(7Z,10Z,12E,16Z,19Z)-docosapentaenoate. It catalyses the reaction (4Z,7Z,10Z,13Z,16Z)-docosapentaenoate + O2 = 14-hydroperoxy-(4Z,7Z,10Z,12E,16Z)-docosapentaenoate. It carries out the reaction N-(5Z,8Z,11Z,14Z)-eicosatetraenoyl-taurine + O2 = N-(12S)-hydroperoxy-(5Z,8Z,10E,14Z)-eicosatetraenoyl-taurine. The catalysed reaction is N-(5Z,8Z,11Z,14Z)-eicosatetraenoyl-gamma-aminobutanoate + O2 = N-(12S)-hydroperoxy-(5Z,8Z,10E,14Z)-eicosatetraenoyl-gamma-aminobutanoate. The enzyme catalyses N-(5Z,8Z,11Z,14Z)-eicosatetraenoyl-glycine + O2 = N-(12S)-hydroperoxy-(5Z,8Z,10E,14Z)-eicosatetraenoyl-glycine. It catalyses the reaction N-(5Z,8Z,11Z,14Z)-eicosatetraenoyl-L-alanine + O2 = N-(12S)-hydroperoxy-(5Z,8Z,10E,14Z)-eicosatetraenoyl-alanine. It carries out the reaction N-(5Z,8Z,11Z,14Z)-eicosatetraenoyl-taurine + O2 = N-(15S)-hydroperoxy-(5Z,8Z,11Z,13E)-eicosatetraenoyl-taurine. The catalysed reaction is N-(5Z,8Z,11Z,14Z)-eicosatetraenoyl-gamma-aminobutanoate + O2 = N-(15S)-hydroperoxy-(5Z,8Z,11Z,13E)-eicosatetraenoyl-gamma-aminobutanoate. The enzyme catalyses N-(5Z,8Z,11Z,14Z)-eicosatetraenoyl-glycine + O2 = N-(15S)-hydroperoxy-(5Z,8Z,11Z,13E)-eicosatetraenoyl-glycine. It catalyses the reaction N-(5Z,8Z,11Z,14Z)-eicosatetraenoyl-L-alanine + O2 = N-(15S)-hydroperoxy-(5Z,8Z,11Z,13E)-eicosatetraenoyl-alanine. It functions in the pathway lipid metabolism; hydroperoxy eicosatetraenoic acid biosynthesis. Its activity is regulated as follows. Activity is increased by binding phosphatidylinositol phosphates, especially phosphatidylinositol 3,4-bisphosphate and phosphatidylinositol 4,5-bisphosphate. Inactivated at 37 degrees Celsius by (13S)-hydroperoxy-(9Z,11E)-octadecadienoate. Non-heme iron-containing dioxygenase that catalyzes the stereo-specific peroxidation of free and esterified polyunsaturated fatty acids generating a spectrum of bioactive lipid mediators. It inserts peroxyl groups at C12 or C15 of arachidonate ((5Z,8Z,11Z,14Z)-eicosatetraenoate) producing both 12-hydroperoxyeicosatetraenoate/12-HPETE and 15-hydroperoxyeicosatetraenoate/15-HPETE. It may then act on 12-HPETE to produce hepoxilins, which may show pro-inflammatory properties. Can also peroxidize linoleate ((9Z,12Z)-octadecadienoate) to 13-hydroperoxyoctadecadienoate/13-HPODE. May participate in the sequential oxidations of DHA ((4Z,7Z,10Z,13Z,16Z,19Z)-docosahexaenoate) to generate specialized pro-resolving mediators (SPMs)like resolvin D5 ((7S,17S)-diHPDHA) and (7S,14S)-diHPDHA, that actively down-regulate the immune response and have anti-aggregation properties with platelets. Can convert epoxy fatty acids to hydroperoxy-epoxides derivatives followed by an intramolecular nucleophilic substitution leading to the formation of monocyclic endoperoxides. Plays an important role during the maintenance of self-tolerance by peroxidizing membrane-bound phosphatidylethanolamine which can then signal the sorting process for clearance of apoptotic cells during inflammation and prevent an autoimmune response. In addition to its role in the immune and inflammatory responses, this enzyme may play a role in epithelial wound healing in the cornea through production of lipoxin A4 (LXA(4)) and docosahexaenoic acid-derived neuroprotectin D1 (NPD1; 10R,17S-HDHA), both lipid autacoids exhibit anti-inflammatory and neuroprotective properties. Furthermore, it may regulate actin polymerization which is crucial for several biological processes such as the phagocytosis of apoptotic cells. It is also implicated in the generation of endogenous ligands for peroxisome proliferator activated receptor (PPAR-gamma), hence modulating macrophage development and function. It may also exert a negative effect on skeletal development by regulating bone mass through this pathway. As well as participates in ER stress and downstream inflammation in adipocytes, pancreatic islets, and liver. Finally, it is also involved in the cellular response to IL13/interleukin-13. This Homo sapiens (Human) protein is Polyunsaturated fatty acid lipoxygenase ALOX15.